The following is a 545-amino-acid chain: High-affinity glucose transporter 1 (545 aa).

9 helical membrane-spanning segments follow: residues 29–49 (VFFIASISTIAGMMFGFDISS), 72–92 (GFITSSMALGSFFGSIASSFV), 100–120 (LSLLTCAFFWMVGAAIQSSVQ), 125–145 (LIIGRIISGIGVGFGSAVAPV), 157–177 (GLIGGMFQFFVTLGIMIMFYL), 192–212 (IAWGLQIVPGLCLFLGCFFIP), 291–311 (LTGMNVMMYYIVYIFQMAGYS), 317–337 (VASSIQYVINTCVTVPALYFI), and 345–365 (LLIGGATMMMAFQFGLAGILG). Residues Asn-376 and Asn-387 are each glycosylated (N-linked (GlcNAc...) asparagine). The next 2 membrane-spanning stretches (helical) occupy residues 395 to 415 (IACCYLFVASFAFTWGVGIWV) and 433 to 453 (ISTSANWILNFAIAMYTPTGF). A glycan (N-linked (GlcNAc...) asparagine) is linked at Asn-455. A helical membrane pass occupies residues 460 to 480 (TYIIYGVFCFAMATHVYFGFP). Residues 524–545 (VEHEEDKLMNEDSNSESRENQA) form a disordered region.

It belongs to the major facilitator superfamily. Sugar transporter (TC 2.A.1.1) family. Interacts with the human complement factors FH and C4BP. Also binds human immunodeficiency virus (HIV) protein gp160.

Its subcellular location is the cell membrane. In terms of biological role, high-affinity glucose transporter. Acts as a multifunctional complement-evasion molecule that causes down-regulation of complement activation by acquisition of human complement factors FH and C4BP. Also functions as a human immunodeficiency virus (HIV) receptor via binding the viral gp160 protein. Modulates hyphae formation. This Candida albicans (strain SC5314 / ATCC MYA-2876) (Yeast) protein is High-affinity glucose transporter 1.